The chain runs to 190 residues: Xanthine phosphoribosyltransferase (190 aa).

Residues L20 and N27 each coordinate xanthine. 128–132 (ANGHA) contributes to the 5-phospho-alpha-D-ribose 1-diphosphate binding site. K156 contacts xanthine.

It belongs to the purine/pyrimidine phosphoribosyltransferase family. Xpt subfamily. Homodimer.

The protein localises to the cytoplasm. The enzyme catalyses XMP + diphosphate = xanthine + 5-phospho-alpha-D-ribose 1-diphosphate. It functions in the pathway purine metabolism; XMP biosynthesis via salvage pathway; XMP from xanthine: step 1/1. In terms of biological role, converts the preformed base xanthine, a product of nucleic acid breakdown, to xanthosine 5'-monophosphate (XMP), so it can be reused for RNA or DNA synthesis. The chain is Xanthine phosphoribosyltransferase from Pseudomonas paraeruginosa (strain DSM 24068 / PA7) (Pseudomonas aeruginosa (strain PA7)).